A 115-amino-acid chain; its full sequence is Potassium-transporting ATPase potassium-binding subunit (115 aa).

A run of 2 helical transmembrane segments spans residues 8–28 (YFLL…VAFF) and 60–80 (SYCT…YGLL).

The protein belongs to the KdpA family. As to quaternary structure, the system is composed of three essential subunits: KdpA, KdpB and KdpC.

Its subcellular location is the cell membrane. Functionally, part of the high-affinity ATP-driven potassium transport (or Kdp) system, which catalyzes the hydrolysis of ATP coupled with the electrogenic transport of potassium into the cytoplasm. This subunit binds the extracellular potassium ions and delivers the ions to the membrane domain of KdpB through an intramembrane tunnel. In Geobacillus stearothermophilus (Bacillus stearothermophilus), this protein is Potassium-transporting ATPase potassium-binding subunit.